Consider the following 192-residue polypeptide: Signal peptidase complex catalytic subunit sec11 (192 aa).

Residues 1–18 are Cytoplasmic-facing; sequence MLSFLSSNLSSTRQSLAQ. A helical; Signal-anchor for type II membrane protein transmembrane segment spans residues 19–39; sequence VLNFALVLSTAFMLWKGLSVF. The Lumenal portion of the chain corresponds to 40 to 192; that stretch reads TASSSPIVVV…GLMVILQREQ (153 aa). Residues serine 53, histidine 92, and aspartate 133 each act as charge relay system in the active site. Positions 177 to 188 are C-terminal short (CTS) helix; that stretch reads VLLGIMGLMVIL.

Belongs to the peptidase S26B family. In terms of assembly, component of the signal peptidase complex (SPC) composed of a catalytic subunit SEC11 and three accessory subunits SPC1, SPC2 and SPC3. The complex induces a local thinning of the ER membrane which is used to measure the length of the signal peptide (SP) h-region of protein substrates. This ensures the selectivity of the complex towards h-regions shorter than 18-20 amino acids. SPC associates with the translocon complex.

It is found in the endoplasmic reticulum membrane. It carries out the reaction Cleavage of hydrophobic, N-terminal signal or leader sequences from secreted and periplasmic proteins.. Catalytic component of the signal peptidase complex (SPC) which catalyzes the cleavage of N-terminal signal sequences from nascent proteins as they are translocated into the lumen of the endoplasmic reticulum. Specifically cleaves N-terminal signal peptides that contain a hydrophobic alpha-helix (h-region) shorter than 18-20 amino acids. This is Signal peptidase complex catalytic subunit sec11 (sec11) from Aspergillus clavatus (strain ATCC 1007 / CBS 513.65 / DSM 816 / NCTC 3887 / NRRL 1 / QM 1276 / 107).